The chain runs to 103 residues: NADH-quinone oxidoreductase subunit K 1 (103 aa).

3 helical membrane-spanning segments follow: residues 6–26 (LGHF…GIFL), 32–52 (IIIL…LVAF), and 67–87 (LVLT…VVFF).

It belongs to the complex I subunit 4L family. NDH-1 is composed of 14 different subunits. Subunits NuoA, H, J, K, L, M, N constitute the membrane sector of the complex.

The protein localises to the cell inner membrane. The enzyme catalyses a quinone + NADH + 5 H(+)(in) = a quinol + NAD(+) + 4 H(+)(out). In terms of biological role, NDH-1 shuttles electrons from NADH, via FMN and iron-sulfur (Fe-S) centers, to quinones in the respiratory chain. The immediate electron acceptor for the enzyme in this species is believed to be ubiquinone. Couples the redox reaction to proton translocation (for every two electrons transferred, four hydrogen ions are translocated across the cytoplasmic membrane), and thus conserves the redox energy in a proton gradient. The polypeptide is NADH-quinone oxidoreductase subunit K 1 (Rhodopseudomonas palustris (strain ATCC BAA-98 / CGA009)).